Here is a 444-residue protein sequence, read N- to C-terminus: Chitinase-like protein Idgf4 (444 aa).

An N-terminal signal peptide occupies residues 1-22 (MKLLLILLGALLAVLTIKRTSA). In terms of domain architecture, GH18 spans 27–444 (NHLICYYDGT…ILRAIKFKFQ (418 aa)). An intrachain disulfide couples Cys-31 to Cys-58. N-linked (GlcNAc...) asparagine glycosylation is present at Asn-226. A disulfide bridge links Cys-345 with Cys-428.

It belongs to the glycosyl hydrolase 18 family. IDGF subfamily. In terms of processing, glycosylated.

Its subcellular location is the secreted. In terms of biological role, cooperates with insulin-like peptides to stimulate the proliferation, polarization and motility of imaginal disk cells. May act by stabilizing the binding of insulin-like peptides to its receptor through a simultaneous interaction with both molecules to form a multiprotein signaling complex. This is Chitinase-like protein Idgf4 (Idgf4) from Glossina morsitans morsitans (Savannah tsetse fly).